A 232-amino-acid polypeptide reads, in one-letter code: Orotidine 5'-phosphate decarboxylase (232 aa).

Substrate is bound by residues Asp11, Lys33, 60 to 69 (DLKFHDIPHT), Thr119, Arg180, Gln189, Gly209, and Arg210. Lys62 functions as the Proton donor in the catalytic mechanism.

It belongs to the OMP decarboxylase family. Type 1 subfamily. In terms of assembly, homodimer.

It carries out the reaction orotidine 5'-phosphate + H(+) = UMP + CO2. Its pathway is pyrimidine metabolism; UMP biosynthesis via de novo pathway; UMP from orotate: step 2/2. Its function is as follows. Catalyzes the decarboxylation of orotidine 5'-monophosphate (OMP) to uridine 5'-monophosphate (UMP). The polypeptide is Orotidine 5'-phosphate decarboxylase (Nitrosococcus oceani (strain ATCC 19707 / BCRC 17464 / JCM 30415 / NCIMB 11848 / C-107)).